A 398-amino-acid polypeptide reads, in one-letter code: Phosphoglycerate kinase (398 aa).

Residues 21–23 (DFN), arginine 36, 59–62 (HLGR), arginine 119, and arginine 157 contribute to the substrate site. ATP contacts are provided by residues lysine 208, glycine 296, glutamate 327, and 354-357 (GGDS).

It belongs to the phosphoglycerate kinase family. In terms of assembly, monomer.

The protein resides in the cytoplasm. It carries out the reaction (2R)-3-phosphoglycerate + ATP = (2R)-3-phospho-glyceroyl phosphate + ADP. It participates in carbohydrate degradation; glycolysis; pyruvate from D-glyceraldehyde 3-phosphate: step 2/5. This is Phosphoglycerate kinase from Streptococcus agalactiae serotype III (strain NEM316).